The sequence spans 1049 residues: Isoleucine--tRNA ligase (1049 aa).

The 'HIGH' region motif lies at 48–59 (PYPSSPTPHIGT). Positions 597–601 (EMHKS) match the 'KMSKS' region motif. Residue Lys-600 coordinates ATP.

Belongs to the class-I aminoacyl-tRNA synthetase family. IleS type 2 subfamily. In terms of assembly, monomer. Zn(2+) serves as cofactor.

It localises to the cytoplasm. It catalyses the reaction tRNA(Ile) + L-isoleucine + ATP = L-isoleucyl-tRNA(Ile) + AMP + diphosphate. Catalyzes the attachment of isoleucine to tRNA(Ile). As IleRS can inadvertently accommodate and process structurally similar amino acids such as valine, to avoid such errors it has two additional distinct tRNA(Ile)-dependent editing activities. One activity is designated as 'pretransfer' editing and involves the hydrolysis of activated Val-AMP. The other activity is designated 'posttransfer' editing and involves deacylation of mischarged Val-tRNA(Ile). This chain is Isoleucine--tRNA ligase, found in Saccharolobus islandicus (strain M.16.27) (Sulfolobus islandicus).